Reading from the N-terminus, the 100-residue chain is MSRKTQRYSKEFKAEAVRTVPENQLSISEGASRLSLPEGTLGQWVTAARKGLGTPGSRTVAELESEILQLRKALNEARLERDILKKATAYFAQESLKNTR.

This sequence belongs to the transposase 8 family.

The chain is Insertion element IS600 uncharacterized 11 kDa protein from Shigella sonnei.